The primary structure comprises 1774 residues: 6-methylsalicylic acid synthase (1774 aa).

Positions 1 to 14 (MHSAATSTYPSGKT) are enriched in polar residues. The segment at 1–21 (MHSAATSTYPSGKTSPAPVGT) is disordered. Positions 32 to 457 (SNDVAVVGMA…GTVSHAVIEE (426 aa)) constitute a Ketosynthase family 3 (KS3) domain. Residues 186 to 238 (RISYHLNLMGPSTAVDAACASSLVAIHHGVQAIRLGESKVAIVGGVNALCGPG) are acyltransferase. Active-site for beta-ketoacyl synthase activity residues include Cys-204, His-339, and His-379. The acetyl/malonyl transferases stretch occupies residues 642–676 (NGITPQAVIGHSVGEIAASVVAGALSPAEGALIVT). Ser-653 functions as the For malonyltransferase activity in the catalytic mechanism. The tract at residues 926–1045 (HTLLGQRIPV…AYWDRKVAGS (120 aa)) is N-terminal hotdog fold. In terms of domain architecture, PKS/mFAS DH spans 926–1202 (HTLLGQRIPV…FSEIEGTPGV (277 aa)). His-958 functions as the Proton acceptor; for dehydratase activity in the catalytic mechanism. A C-terminal hotdog fold region spans residues 1059–1202 (VTKLADNFSI…FSEIEGTPGV (144 aa)). The Proton donor; for dehydratase activity role is filled by Asp-1123. Positions 1403–1450 (GPRLLPRPEGTYLITGGLGVLGLEVADFLVEKGARRLLLISRRALPPR) are 2-oxoacyl reductase. Residue 1419 to 1424 (GLGVLG) participates in NADP(+) binding. The region spanning 1698 to 1772 (AYLDEKIRGC…HLAVWFAEKL (75 aa)) is the Carrier domain. The residue at position 1732 (Ser-1732) is an O-(pantetheine 4'-phosphoryl)serine.

In terms of assembly, homomultimer.

The enzyme catalyses 3 malonyl-CoA + acetyl-CoA + NADPH + 3 H(+) = 6-methylsalicylate + 3 CO2 + NADP(+) + 4 CoA + H2O. Its pathway is mycotoxin biosynthesis; patulin biosynthesis. Functionally, this multifunctional enzyme is a polyketide synthase. It catalyzes a total of 11 steps by seven different component enzymes, in the biosynthesis of the antibiotic patulin. In Penicillium patulum (Penicillium griseofulvum), this protein is 6-methylsalicylic acid synthase.